Reading from the N-terminus, the 366-residue chain is Flagellar P-ring protein (366 aa).

Residues 1–24 form the signal peptide; it reads MWPLLLAVALSTLLPLAMPGSAGA.

It belongs to the FlgI family. The basal body constitutes a major portion of the flagellar organelle and consists of four rings (L,P,S, and M) mounted on a central rod.

Its subcellular location is the periplasm. It is found in the bacterial flagellum basal body. Assembles around the rod to form the L-ring and probably protects the motor/basal body from shearing forces during rotation. This chain is Flagellar P-ring protein, found in Nitratidesulfovibrio vulgaris (strain ATCC 29579 / DSM 644 / CCUG 34227 / NCIMB 8303 / VKM B-1760 / Hildenborough) (Desulfovibrio vulgaris).